The following is a 71-amino-acid chain: DNA-directed RNA polymerases II, IV and V subunit 10 (71 aa).

4 residues coordinate Zn(2+): Cys-7, Cys-10, Cys-44, and Cys-45.

This sequence belongs to the archaeal Rpo10/eukaryotic RPB10 RNA polymerase subunit family. Component of the RNA polymerase II, IV and V complexes. Interacts with NRPD1.

The protein resides in the nucleus. In terms of biological role, DNA-dependent RNA polymerase catalyzes the transcription of DNA into RNA using the four ribonucleoside triphosphates as substrates. Component of RNA polymerase II which synthesizes mRNA precursors and many functional non-coding RNAs. Pol II is the central component of the basal RNA polymerase II transcription machinery. It is composed of mobile elements that move relative to each other. Component of RNA polymerases IV and V which mediate short-interfering RNAs (siRNA) accumulation and subsequent RNA-directed DNA methylation-dependent (RdDM) transcriptional gene silencing (TGS) of endogenous repeated sequences, including transposable elements. The sequence is that of DNA-directed RNA polymerases II, IV and V subunit 10 (NRPB10) from Arabidopsis thaliana (Mouse-ear cress).